Consider the following 520-residue polypeptide: ADP,ATP carrier protein 4 (520 aa).

12 consecutive transmembrane segments (helical) span residues 43-63 (LSKFLFITLLMFCILFIQNLI), 80-100 (ISFLKFWGVMPCAFLMTAIYV), 111-131 (IFYLIISIFLAFFALFAYVIF), 166-186 (FSLFYIIAELWPNVAFALLFW), 201-221 (FYPLFGLLSQTGIYLAGQFLE), 240-260 (FHTLSVQIILTIVLILGIVGI), 305-325 (LIATLLICYGIAINLVEGPWK), 339-359 (AAFIGNYLSYTGAFTILFVVL), 370-390 (FTAAIITPIIVFTTGILFFAV), 399-419 (LIVASFILTDPALIAITIGAI), 462-482 (LGKSGSAFLQSLVFIILPSAS), and 485-505 (SISVCLMFIFIITCLIWFWAV).

Belongs to the ADP/ATP translocase tlc family.

It is found in the cell membrane. Its function is as follows. Provides the rickettsial cell with host ATP in exchange for rickettsial ADP. This is an obligate exchange system. This energy acquiring activity is an important component of rickettsial parasitism. This is ADP,ATP carrier protein 4 (tlcD) from Rickettsia bellii (strain RML369-C).